A 175-amino-acid polypeptide reads, in one-letter code: uncharacterized protein (175 aa).

Disordered stretches follow at residues M1–H32 and K156–Q175. Low complexity predominate over residues L14–K24.

This is an uncharacterized protein from Mycoplasma pneumoniae (strain ATCC 29342 / M129 / Subtype 1) (Mycoplasmoides pneumoniae).